Here is a 566-residue protein sequence, read N- to C-terminus: Serine/threonine-protein kinase PknE (566 aa).

Residues 1–337 (MDGTAESREG…PLPRSARQPW (337 aa)) lie on the Cytoplasmic side of the membrane. At S7 the chain carries Phosphoserine; by autocatalysis. T11 carries the post-translational modification Phosphothreonine; by autocatalysis. Residues 16–275 (YRLRRLVGRG…DLSAAAHAAL (260 aa)) form the Protein kinase domain. ATP contacts are provided by residues 22 to 30 (VGRGGMGDV) and K45. Phosphothreonine; by autocatalysis occurs at positions 50 and 59. The Proton acceptor role is filled by D139. Phosphothreonine; by autocatalysis occurs at positions 170, 175, and 178. The disordered stretch occupies residues 296 to 330 (PVPSTHPVSPGTRWPQPTPWAGGAPPWGPPSSPLP). Residues 338-358 (LWVGVAVAVVVALAGGLGIAL) form a helical membrane-spanning segment. The Extracellular portion of the chain corresponds to 359-566 (AHPWRSSGPR…DPSWLARLIG (208 aa)).

Belongs to the protein kinase superfamily. Ser/Thr protein kinase family. In terms of processing, autophosphorylated on serine and threonine residues. Dephosphorylated by PstP.

The protein localises to the cell membrane. It carries out the reaction L-seryl-[protein] + ATP = O-phospho-L-seryl-[protein] + ADP + H(+). The enzyme catalyses L-threonyl-[protein] + ATP = O-phospho-L-threonyl-[protein] + ADP + H(+). The chain is Serine/threonine-protein kinase PknE (pknE) from Mycobacterium bovis (strain ATCC BAA-935 / AF2122/97).